Reading from the N-terminus, the 328-residue chain is PhoH-like protein (328 aa).

135–142 (GPAGTGKT) contributes to the ATP binding site.

The protein belongs to the PhoH family.

It localises to the cytoplasm. In Synechocystis sp. (strain ATCC 27184 / PCC 6803 / Kazusa), this protein is PhoH-like protein.